A 217-amino-acid polypeptide reads, in one-letter code: MSPVRPRYFTPREVSRHCVLSDLWVSYLGRVYDLTPLLEQHKGDVLLKPIIAAGGRDISHWFNPKTGDVKTHIDPQTGCLKYYTPQGRFLHIAPCFPCSGWDNDFGRPWWKDTIYQVGILSSKTRFIRIINTLTSQEQMLEVCSEETIWEILQRYLAYNAHAASYTWKFCGVPLDMDKTLQENGVQDEDLEFEELKIDADLYTPSIHLYFNDDLTEL.

The Cytochrome b5 heme-binding domain maps to 6–72; sequence PRYFTPREVS…NPKTGDVKTH (67 aa). Histidine 41 and histidine 72 together coordinate heme.

The protein belongs to the cytochrome b5 family.

The protein localises to the cytoplasm. It is found in the cytoskeleton. It localises to the cilium axoneme. Functionally, radial spoke stalk protein that binds heme under oxidizing conditions. Required for the coordinated beating of multiple cilia maybe by functioning in a redox signaling pathway. The protein is Cytochrome b5 domain-containing protein 1 (cyb5d1) of Xenopus laevis (African clawed frog).